A 381-amino-acid polypeptide reads, in one-letter code: Succinyl-diaminopimelate desuccinylase (381 aa).

H71 contributes to the Zn(2+) binding site. D73 is an active-site residue. D104 lines the Zn(2+) pocket. Residue E138 is the Proton acceptor of the active site. Residues E139, E167, and H353 each contribute to the Zn(2+) site.

It belongs to the peptidase M20A family. DapE subfamily. Homodimer. The cofactor is Zn(2+). It depends on Co(2+) as a cofactor.

The enzyme catalyses N-succinyl-(2S,6S)-2,6-diaminopimelate + H2O = (2S,6S)-2,6-diaminopimelate + succinate. Its pathway is amino-acid biosynthesis; L-lysine biosynthesis via DAP pathway; LL-2,6-diaminopimelate from (S)-tetrahydrodipicolinate (succinylase route): step 3/3. Functionally, catalyzes the hydrolysis of N-succinyl-L,L-diaminopimelic acid (SDAP), forming succinate and LL-2,6-diaminopimelate (DAP), an intermediate involved in the bacterial biosynthesis of lysine and meso-diaminopimelic acid, an essential component of bacterial cell walls. The chain is Succinyl-diaminopimelate desuccinylase from Shewanella halifaxensis (strain HAW-EB4).